Here is a 149-residue protein sequence, read N- to C-terminus: Transcriptional repressor NrdR (149 aa).

Residues 3 to 34 fold into a zinc finger; the sequence is CPFCAAVDTKVIDSRLVSDGSQVRRRRQCLDC. The ATP-cone domain occupies 49 to 139; the sequence is PRVIKSDDVR…VYRSFEDIRE (91 aa).

It belongs to the NrdR family. The cofactor is Zn(2+).

In terms of biological role, negatively regulates transcription of bacterial ribonucleotide reductase nrd genes and operons by binding to NrdR-boxes. The protein is Transcriptional repressor NrdR of Yersinia enterocolitica serotype O:8 / biotype 1B (strain NCTC 13174 / 8081).